A 125-amino-acid chain; its full sequence is Meiotically up-regulated gene 112 protein (125 aa).

The protein resides in the golgi apparatus. Functionally, has a role in meiosis. This Schizosaccharomyces pombe (strain 972 / ATCC 24843) (Fission yeast) protein is Meiotically up-regulated gene 112 protein (mug112).